The following is a 555-amino-acid chain: GPI-anchor transamidase component PIGS (555 aa).

At 2–18 (AAAGAAATDLEVVRGKR) the chain is on the cytoplasmic side. A cardiolipin-binding residues include Arg15 and Arg18. The helical transmembrane segment at 19 to 39 (SALFFAAVAILLGLPLWWKTT) threads the bilayer. Topologically, residues 40–517 (ETYRAPLPYS…LHLLYFPDDQ (478 aa)) are lumenal. Residues Asn267 and Asn370 are each glycosylated (N-linked (GlcNAc...) asparagine). A helical transmembrane segment spans residues 518 to 532 (KFAIYIPLFLPMAVP). Topologically, residues 533–555 (ILLSLVKIFQETRKSWKKPEKID) are cytoplasmic.

It belongs to the PIGS family. Heteropentamer. Part of the GPI-anchor transamidase complex, consisting of PIGK, PIGT, PIGS, PIGU and GAA1.

The protein resides in the endoplasmic reticulum membrane. Its pathway is glycolipid biosynthesis; glycosylphosphatidylinositol-anchor biosynthesis. Component of the glycosylphosphatidylinositol-anchor (GPI-anchor) transamidase (GPI-T) complex that catalyzes the formation of the linkage between a proprotein and a GPI-anchor and participates in GPI anchored protein biosynthesis. This is GPI-anchor transamidase component PIGS from Mus musculus (Mouse).